Here is a 297-residue protein sequence, read N- to C-terminus: Probable endonuclease 4 (297 aa).

Positions 1-21 are disordered; the sequence is MPEIGAHVSAAGGPQRAPERG. 9 residues coordinate Zn(2+): H67, H107, E145, D179, H182, H216, D229, H231, and E261.

Belongs to the AP endonuclease 2 family. Requires Zn(2+) as cofactor.

It carries out the reaction Endonucleolytic cleavage to 5'-phosphooligonucleotide end-products.. Endonuclease IV plays a role in DNA repair. It cleaves phosphodiester bonds at apurinic or apyrimidinic (AP) sites, generating a 3'-hydroxyl group and a 5'-terminal sugar phosphate. The protein is Probable endonuclease 4 of Halorhodospira halophila (strain DSM 244 / SL1) (Ectothiorhodospira halophila (strain DSM 244 / SL1)).